A 173-amino-acid polypeptide reads, in one-letter code: 3-hydroxydecanoyl-[acyl-carrier-protein] dehydratase (173 aa).

His71 is a catalytic residue.

Belongs to the thioester dehydratase family. FabA subfamily. Homodimer.

The protein localises to the cytoplasm. It catalyses the reaction a (3R)-hydroxyacyl-[ACP] = a (2E)-enoyl-[ACP] + H2O. It carries out the reaction (3R)-hydroxydecanoyl-[ACP] = (2E)-decenoyl-[ACP] + H2O. The catalysed reaction is (2E)-decenoyl-[ACP] = (3Z)-decenoyl-[ACP]. It functions in the pathway lipid metabolism; fatty acid biosynthesis. In terms of biological role, necessary for the introduction of cis unsaturation into fatty acids. Catalyzes the dehydration of (3R)-3-hydroxydecanoyl-ACP to E-(2)-decenoyl-ACP and then its isomerization to Z-(3)-decenoyl-ACP. Can catalyze the dehydratase reaction for beta-hydroxyacyl-ACPs with saturated chain lengths up to 16:0, being most active on intermediate chain length. This is 3-hydroxydecanoyl-[acyl-carrier-protein] dehydratase from Bradyrhizobium diazoefficiens (strain JCM 10833 / BCRC 13528 / IAM 13628 / NBRC 14792 / USDA 110).